We begin with the raw amino-acid sequence, 219 residues long: EP300-interacting inhibitor of differentiation 2 (219 aa).

Residues 1-71 (MSELPADQGV…PVPEAREGPM (71 aa)) form a disordered region. Residues 20–34 (GDVRQAEVGGRRREP) show a composition bias toward basic and acidic residues. Arg-75 is subject to Omega-N-methylarginine. Positions 95-115 (AEPAEEEGPEGRPRSRPGNGP) are disordered.

Heterodimer with EID2B. Interacts with the C-terminus of EP300. Interacts with HDAC1 and HDAC2. Interacts with SMAD2, SMAD4 and with the MH2 domain of SMAD3.

It is found in the nucleus. In terms of biological role, interacts with EP300 and acts as a repressor of MYOD-dependent transcription and muscle differentiation. Inhibits EP300 histone acetyltransferase activity. Acts as a repressor of TGFB/SMAD transcriptional responses. May act as a repressor of the TGFB/SMAD3-dependent signaling by selectively blocking formation of TGFB-induced SMAD3-SMAD4 complex. This is EP300-interacting inhibitor of differentiation 2 from Bos taurus (Bovine).